The sequence spans 341 residues: Vacuolar morphogenesis protein 7 homolog (341 aa).

The 115-residue stretch at 1-115 folds into the PX domain; sequence MALKIKIPET…KFLNIKDESE (115 aa). Low complexity predominate over residues 214-233; the sequence is NSPVAPPSASSQLNSSNPSS. A disordered region spans residues 214–265; it reads NSPVAPPSASSQLNSSNPSSPFRPLSASTDKQSNTSLNRVLGKNRMPETQTT. Over residues 239 to 251 the composition is skewed to polar residues; that stretch reads SASTDKQSNTSLN. A t-SNARE coiled-coil homology domain is found at 278–340; sequence NQTMEDQDMQ…HRTRAGLRKL (63 aa).

Possibly multimeric.

It localises to the vacuole. Functionally, essential for proper morphogenesis of the vacuole. May exist as structural reinforcement on the surface of the vacuolar membrane and be required for maintenance against rupture by osmotic pressure. The sequence is that of Vacuolar morphogenesis protein 7 homolog from Schizosaccharomyces pombe (strain 972 / ATCC 24843) (Fission yeast).